We begin with the raw amino-acid sequence, 375 residues long: Anhydro-N-acetylmuramic acid kinase (375 aa).

12–19 (GTSLDGVD) contributes to the ATP binding site.

Belongs to the anhydro-N-acetylmuramic acid kinase family.

It catalyses the reaction 1,6-anhydro-N-acetyl-beta-muramate + ATP + H2O = N-acetyl-D-muramate 6-phosphate + ADP + H(+). The protein operates within amino-sugar metabolism; 1,6-anhydro-N-acetylmuramate degradation. It participates in cell wall biogenesis; peptidoglycan recycling. In terms of biological role, catalyzes the specific phosphorylation of 1,6-anhydro-N-acetylmuramic acid (anhMurNAc) with the simultaneous cleavage of the 1,6-anhydro ring, generating MurNAc-6-P. Is required for the utilization of anhMurNAc either imported from the medium or derived from its own cell wall murein, and thus plays a role in cell wall recycling. The chain is Anhydro-N-acetylmuramic acid kinase from Mannheimia succiniciproducens (strain KCTC 0769BP / MBEL55E).